A 502-amino-acid polypeptide reads, in one-letter code: ATP synthase subunit alpha (502 aa).

169 to 176 provides a ligand contact to ATP; sequence GDRATGKT.

Belongs to the ATPase alpha/beta chains family. In terms of assembly, F-type ATPases have 2 components, CF(1) - the catalytic core - and CF(0) - the membrane proton channel. CF(1) has five subunits: alpha(3), beta(3), gamma(1), delta(1), epsilon(1). CF(0) has three main subunits: a(1), b(2) and c(9-12). The alpha and beta chains form an alternating ring which encloses part of the gamma chain. CF(1) is attached to CF(0) by a central stalk formed by the gamma and epsilon chains, while a peripheral stalk is formed by the delta and b chains.

The protein localises to the cell inner membrane. The catalysed reaction is ATP + H2O + 4 H(+)(in) = ADP + phosphate + 5 H(+)(out). Functionally, produces ATP from ADP in the presence of a proton gradient across the membrane. The alpha chain is a regulatory subunit. The sequence is that of ATP synthase subunit alpha from Hydrogenobaculum sp. (strain Y04AAS1).